The chain runs to 428 residues: Dihydroorotase (428 aa).

Zn(2+)-binding residues include His59 and His61. Substrate is bound by residues 61–63 (HLR) and Asn93. Zn(2+)-binding residues include Asp151, His178, and His231. Residue Asn277 coordinates substrate. Asp304 contributes to the Zn(2+) binding site. Residue Asp304 is part of the active site. Substrate contacts are provided by residues His308 and 322 to 323 (FG).

The protein belongs to the metallo-dependent hydrolases superfamily. DHOase family. Class I DHOase subfamily. It depends on Zn(2+) as a cofactor.

The catalysed reaction is (S)-dihydroorotate + H2O = N-carbamoyl-L-aspartate + H(+). Its pathway is pyrimidine metabolism; UMP biosynthesis via de novo pathway; (S)-dihydroorotate from bicarbonate: step 3/3. Functionally, catalyzes the reversible cyclization of carbamoyl aspartate to dihydroorotate. The sequence is that of Dihydroorotase from Bacillus cereus (strain AH187).